Here is a 458-residue protein sequence, read N- to C-terminus: NADH-ubiquinone oxidoreductase chain 4 (458 aa).

12 helical membrane-spanning segments follow: residues 21–43, 58–78, 93–112, 116–138, 145–165, 196–216, 224–244, 257–277, 285–305, 309–329, 341–361, and 379–399; these read ASLW…QWLN, IDQI…LMLL, RTFI…AFSA, TLFY…RWGN, AGIY…VTIL, GLAL…HLWL, PIAG…YGIM, LSYP…SICL, LIAY…MIQT, FSGA…LFCL, ILLL…WWLL, and LTIM…TGLA.

The protein belongs to the complex I subunit 4 family.

It is found in the mitochondrion membrane. The catalysed reaction is a ubiquinone + NADH + 5 H(+)(in) = a ubiquinol + NAD(+) + 4 H(+)(out). Core subunit of the mitochondrial membrane respiratory chain NADH dehydrogenase (Complex I) that is believed to belong to the minimal assembly required for catalysis. Complex I functions in the transfer of electrons from NADH to the respiratory chain. The immediate electron acceptor for the enzyme is believed to be ubiquinone. In Struthio camelus (Common ostrich), this protein is NADH-ubiquinone oxidoreductase chain 4 (MT-ND4).